The sequence spans 67 residues: Tachystatin-A2 (67 aa).

Positions 1–23 (MKLQNTLILIGCLFLMGAMIGDA) are cleaved as a signal peptide. 3 disulfide bridges follow: Cys27–Cys47, Cys34–Cys52, and Cys46–Cys64.

As to expression, granular hemocytes, small secretory granules.

The protein resides in the secreted. In terms of biological role, exhibits stronger antimicrobial activity against the Gram-positive bacteria (S.aureus (IC(50)=4.2 ug/ml)) and fungi (C.albicans (IC(50)=3.0 ug/ml) and P.pastoris (IC(50)=0.5 ug/ml)) than Gram-negative bacteria (E.coli (IC(50)=25 ug/ml)). Binds to chitin (8.4 uM are required to obtain 50% of binding). Does not cause hemolysis on sheep erythrocytes. Has no blocking activity on the P-type calcium channel. Has also been shown to weakly inhibit Kv1.2/KCNA2 voltage-gated potassium channels and TRPV1 receptors. The polypeptide is Tachystatin-A2 (Tachypleus tridentatus (Japanese horseshoe crab)).